Reading from the N-terminus, the 495-residue chain is MNNPSKAAQKKPKSNLIDGWEVVIGIEIHTQLATQSKIFSGSSTEFGQDPNTQASLVDLAMPGVLPVLNEEVVNLAIRFGLGIDAYIDQASVFARKNYFYPDSPKGYQISQMDNPIVGLGHIDIQLEDGTVKRIGVTRAHLEEDAGKSIHDQFEGQSGIDLNRAGTPLLEIVSEPDMRSVEEAVAYIKSIHTLVRWLGISDGNMAEGSFRADCNVSLRRPGDAFGTRCELKNLNSFRFIEQAINVEIERQMEILEWGGTIDQETRLFDPNKMETRSMRSKEEANDYRYFPDPDLLPVIIADEQIKAIKATMPELPAARRERFIAEFAITEYDAHVLTLSREMADFYEAVVAAAGGAAHGKIAANWVMGEFSGALNKAGLELADSPVSAEQLGGMIARIVDNTISGKIAKQVFGFMWDEGKSADTIIQEKSLKQETDTGAIEAIIKDVLAANEKMVEEYKSGKEKAFNGLVGQVMKASKGKANPAQVNELMKKLIG.

The protein belongs to the GatB/GatE family. GatB subfamily. In terms of assembly, heterotrimer of A, B and C subunits.

It carries out the reaction L-glutamyl-tRNA(Gln) + L-glutamine + ATP + H2O = L-glutaminyl-tRNA(Gln) + L-glutamate + ADP + phosphate + H(+). It catalyses the reaction L-aspartyl-tRNA(Asn) + L-glutamine + ATP + H2O = L-asparaginyl-tRNA(Asn) + L-glutamate + ADP + phosphate + 2 H(+). Its function is as follows. Allows the formation of correctly charged Asn-tRNA(Asn) or Gln-tRNA(Gln) through the transamidation of misacylated Asp-tRNA(Asn) or Glu-tRNA(Gln) in organisms which lack either or both of asparaginyl-tRNA or glutaminyl-tRNA synthetases. The reaction takes place in the presence of glutamine and ATP through an activated phospho-Asp-tRNA(Asn) or phospho-Glu-tRNA(Gln). This Acinetobacter baylyi (strain ATCC 33305 / BD413 / ADP1) protein is Aspartyl/glutamyl-tRNA(Asn/Gln) amidotransferase subunit B.